A 120-amino-acid chain; its full sequence is Large ribosomal subunit protein bL17 (120 aa).

Belongs to the bacterial ribosomal protein bL17 family. In terms of assembly, part of the 50S ribosomal subunit. Contacts protein L32.

This is Large ribosomal subunit protein bL17 from Mesomycoplasma hyopneumoniae (strain 232) (Mycoplasma hyopneumoniae).